A 70-amino-acid polypeptide reads, in one-letter code: uncharacterized protein (70 aa).

The protein belongs to the opacity porin family.

This is an uncharacterized protein from Haemophilus influenzae (strain ATCC 51907 / DSM 11121 / KW20 / Rd).